The primary structure comprises 378 residues: ATP phosphoribosyltransferase regulatory subunit (378 aa).

The protein belongs to the class-II aminoacyl-tRNA synthetase family. HisZ subfamily. In terms of assembly, heteromultimer composed of HisG and HisZ subunits.

The protein localises to the cytoplasm. It participates in amino-acid biosynthesis; L-histidine biosynthesis; L-histidine from 5-phospho-alpha-D-ribose 1-diphosphate: step 1/9. Functionally, required for the first step of histidine biosynthesis. May allow the feedback regulation of ATP phosphoribosyltransferase activity by histidine. This Brucella abortus (strain 2308) protein is ATP phosphoribosyltransferase regulatory subunit.